A 98-amino-acid polypeptide reads, in one-letter code: Large ribosomal subunit protein uL23 (98 aa).

The protein belongs to the universal ribosomal protein uL23 family. Part of the 50S ribosomal subunit. Contacts protein L29, and trigger factor when it is bound to the ribosome.

Its function is as follows. One of the early assembly proteins it binds 23S rRNA. One of the proteins that surrounds the polypeptide exit tunnel on the outside of the ribosome. Forms the main docking site for trigger factor binding to the ribosome. The sequence is that of Large ribosomal subunit protein uL23 from Streptococcus pneumoniae serotype 19F (strain G54).